A 1571-amino-acid polypeptide reads, in one-letter code: Neurexin-3 (1571 aa).

The first 27 residues, 1–27 (MSFTLHSVFFTLKVSIFLGSLVGLCLG), serve as a signal peptide directing secretion. A Laminin G-like 1 domain is found at 28 to 202 (LEFMGLPNQW…SVQLEAEGPC (175 aa)). The Extracellular segment spans residues 28–1496 (LEFMGLPNQW…EVIRESSSTT (1469 aa)). N-linked (GlcNAc...) asparagine glycans are attached at residues Asn-58 and Asn-105. Positions 198 to 235 (AEGPCGERPCENGGICFLLDGHPTCDCSTTGYGGTLCS) constitute an EGF-like 1 domain. Cystine bridges form between Cys-202–Cys-213, Cys-207–Cys-222, and Cys-224–Cys-234. 2 consecutive Laminin G-like domains span residues 258–440 (VATF…VFKC) and 447–639 (DPIN…KSSC). Asp-304, Leu-321, and Met-374 together coordinate Ca(2+). 5 cysteine pairs are disulfide-bonded: Cys-404-Cys-440, Cys-610-Cys-639, Cys-647-Cys-658, Cys-652-Cys-667, and Cys-669-Cys-679. An EGF-like 2 domain is found at 643–680 (SAKQCDSYPCKNNAVCKDGWNRFICDCTGTGYWGRTCE). Laminin G-like domains are found at residues 685–857 (ILSY…IDYC) and 871–1046 (DPVT…ERGC). Positions 732 and 749 each coordinate Ca(2+). N-linked (GlcNAc...) asparagine glycosylation occurs at Asn-757. Arg-807 lines the Ca(2+) pocket. 4 disulfides stabilise this stretch: Cys-1018-Cys-1046, Cys-1053-Cys-1064, Cys-1058-Cys-1073, and Cys-1075-Cys-1085. The EGF-like 3 domain occupies 1049–1086 (PSTTCQEDSCANQGVCMQQWEGFTCDCSMTSYSGNQCN). Residues 1090-1290 (ATYIFGKSGG…NPNIKINGSV (201 aa)) form the Laminin G-like 6 domain. Ca(2+) contacts are provided by Asp-1142 and Ile-1159. N-linked (GlcNAc...) asparagine glycosylation is present at Asn-1189. 2 residues coordinate Ca(2+): Ile-1241 and Asn-1243. Residues Asn-1287 and Asn-1331 are each glycosylated (N-linked (GlcNAc...) asparagine). Positions 1324-1348 (ATTTTRKNRSTASIQPTSDDLVSSA) are disordered. The segment covering 1333–1348 (STASIQPTSDDLVSSA) has biased composition (polar residues). Ser-1347 is a glycosylation site (O-linked (Xyl...) (heparan sulfate) serine). The helical transmembrane segment at 1497–1517 (GMVVGIVAAAALCILILLYAM) threads the bilayer. At 1518–1571 (YKYRNRDEGSYQVDETRNYISNSAQSNGTLMKEKQASSKSGHKKQKNKDKEYYV) the chain is on the cytoplasmic side. The tract at residues 1539–1571 (NSAQSNGTLMKEKQASSKSGHKKQKNKDKEYYV) is disordered.

The protein belongs to the neurexin family. In terms of assembly, the laminin G-like domain 2 binds to NXPH1. Specific isoforms bind to alpha-dystroglycan. The cytoplasmic C-terminal region binds to CASK. Specific isoforms bind neuroligins NLGN1, NLGN2 and NLGN3. Interacts with CLSTN3. In terms of processing, O-glycosylated; contains heparan sulfate. Heparan sulfate attachment is required for synapse development by mediating interactions with neuroligins. Brain and arteries (at protein level).

The protein localises to the presynaptic cell membrane. Neuronal cell surface protein that may be involved in cell recognition and cell adhesion. May mediate intracellular signaling. The sequence is that of Neurexin-3 (Nrxn3) from Mus musculus (Mouse).